The sequence spans 62 residues: Small ribosomal subunit protein uS14 (62 aa).

Residues Cys-25, Cys-28, Cys-41, and Cys-44 each coordinate Zn(2+).

It belongs to the universal ribosomal protein uS14 family. Zinc-binding uS14 subfamily. In terms of assembly, part of the 30S ribosomal subunit. Contacts proteins S3 and S10. It depends on Zn(2+) as a cofactor.

In terms of biological role, binds 16S rRNA, required for the assembly of 30S particles and may also be responsible for determining the conformation of the 16S rRNA at the A site. This is Small ribosomal subunit protein uS14 from Aquifex aeolicus (strain VF5).